The chain runs to 36 residues: Photosystem I reaction center subunit VIII (36 aa).

Residues 9–29 form a helical membrane-spanning segment; sequence ILTPVVTLVFPGLMFALFFVL.

The protein belongs to the PsaI family.

It localises to the plastid. Its subcellular location is the chloroplast thylakoid membrane. May help in the organization of the PsaL subunit. This is Photosystem I reaction center subunit VIII from Emiliania huxleyi (Coccolithophore).